The chain runs to 353 residues: D-alanine--D-alanine ligase (353 aa).

In terms of domain architecture, ATP-grasp spans lysine 141–histidine 349. Glutamate 176–glutamate 231 contacts ATP. Residues aspartate 302, glutamate 316, and asparagine 318 each coordinate Mg(2+).

The protein belongs to the D-alanine--D-alanine ligase family. Mg(2+) serves as cofactor. Requires Mn(2+) as cofactor.

The protein localises to the cytoplasm. It carries out the reaction 2 D-alanine + ATP = D-alanyl-D-alanine + ADP + phosphate + H(+). Its pathway is cell wall biogenesis; peptidoglycan biosynthesis. In terms of biological role, cell wall formation. This is D-alanine--D-alanine ligase from Synechococcus sp. (strain CC9311).